The chain runs to 1277 residues: DNA repair protein RAD5B (1277 aa).

Residues 271-293 (KLEQENDDLFSSGDSDGTSAKRR) form a disordered region. Positions 674-871 (PTATQMARGG…YSLLCFLHVE (198 aa)) constitute a Helicase ATP-binding domain. Residue 687 to 694 (DAMGLGKT) coordinates ATP. A DEAH box motif is present at residues 822–825 (DEAH). The RING-type zinc finger occupies 1040 to 1080 (CPICLESADDPVLTPCAHRMCRECLLTSWRSPSCGLCPICR). The Helicase C-terminal domain maps to 1113 to 1277 (ELLKCLEKIK…RLEELKMLFR (165 aa)).

The protein belongs to the SNF2/RAD54 helicase family. RAD16 subfamily.

It localises to the nucleus. In terms of biological role, possesses intrinsic ATP-dependent nucleosome-remodeling activity. This activity may be required for DNA repair. Does not seem to be required for DNA repair and regulation of homologous recombination (HR). This Arabidopsis thaliana (Mouse-ear cress) protein is DNA repair protein RAD5B.